Reading from the N-terminus, the 224-residue chain is uncharacterized protein (224 aa).

Positions 1 to 17 are cleaved as a signal peptide; it reads MFTILLYFLVLFWVTNA.

This is an uncharacterized protein from Caenorhabditis elegans.